Here is a 376-residue protein sequence, read N- to C-terminus: 3-dehydroquinate synthase (376 aa).

NAD(+) is bound by residues glycine 115–aspartate 119, threonine 139–serine 140, lysine 152, and lysine 161. Residues glutamate 194, histidine 256, and histidine 275 each coordinate Zn(2+).

Belongs to the sugar phosphate cyclases superfamily. Dehydroquinate synthase family. The cofactor is Co(2+). Zn(2+) is required as a cofactor. NAD(+) serves as cofactor.

Its subcellular location is the cytoplasm. It catalyses the reaction 7-phospho-2-dehydro-3-deoxy-D-arabino-heptonate = 3-dehydroquinate + phosphate. It functions in the pathway metabolic intermediate biosynthesis; chorismate biosynthesis; chorismate from D-erythrose 4-phosphate and phosphoenolpyruvate: step 2/7. Catalyzes the conversion of 3-deoxy-D-arabino-heptulosonate 7-phosphate (DAHP) to dehydroquinate (DHQ). This chain is 3-dehydroquinate synthase, found in Rhizobium johnstonii (strain DSM 114642 / LMG 32736 / 3841) (Rhizobium leguminosarum bv. viciae).